An 81-amino-acid chain; its full sequence is MNPLIAAASVIAAGLAVGLASIGPGVGQGTAAGQAVEGIARQPEAEGKIRGTLLLSLAFMEALTIYGLVVALALLFANPFV.

2 helical membrane passes run proline 3–glycine 23 and leucine 57–alanine 77.

Belongs to the ATPase C chain family. F-type ATPases have 2 components, F(1) - the catalytic core - and F(0) - the membrane proton channel. F(1) has five subunits: alpha(3), beta(3), gamma(1), delta(1), epsilon(1). F(0) has four main subunits: a(1), b(1), b'(1) and c(10-14). The alpha and beta chains form an alternating ring which encloses part of the gamma chain. F(1) is attached to F(0) by a central stalk formed by the gamma and epsilon chains, while a peripheral stalk is formed by the delta, b and b' chains.

It localises to the plastid. Its subcellular location is the chloroplast thylakoid membrane. F(1)F(0) ATP synthase produces ATP from ADP in the presence of a proton or sodium gradient. F-type ATPases consist of two structural domains, F(1) containing the extramembraneous catalytic core and F(0) containing the membrane proton channel, linked together by a central stalk and a peripheral stalk. During catalysis, ATP synthesis in the catalytic domain of F(1) is coupled via a rotary mechanism of the central stalk subunits to proton translocation. Its function is as follows. Key component of the F(0) channel; it plays a direct role in translocation across the membrane. A homomeric c-ring of between 10-14 subunits forms the central stalk rotor element with the F(1) delta and epsilon subunits. In Agrostis stolonifera (Creeping bentgrass), this protein is ATP synthase subunit c, chloroplastic.